We begin with the raw amino-acid sequence, 446 residues long: Phosphoglucosamine mutase (446 aa).

Residue serine 99 is the Phosphoserine intermediate of the active site. Positions 99, 242, 244, and 246 each coordinate Mg(2+). Serine 99 carries the phosphoserine modification.

The protein belongs to the phosphohexose mutase family. It depends on Mg(2+) as a cofactor. Activated by phosphorylation.

The enzyme catalyses alpha-D-glucosamine 1-phosphate = D-glucosamine 6-phosphate. In terms of biological role, catalyzes the conversion of glucosamine-6-phosphate to glucosamine-1-phosphate. The protein is Phosphoglucosamine mutase of Wolinella succinogenes (strain ATCC 29543 / DSM 1740 / CCUG 13145 / JCM 31913 / LMG 7466 / NCTC 11488 / FDC 602W) (Vibrio succinogenes).